Consider the following 288-residue polypeptide: Acetyl-coenzyme A carboxylase carboxyl transferase subunit beta (288 aa).

One can recognise a CoA carboxyltransferase N-terminal domain in the interval 34–288; that stretch reads LFAKCPACKH…HLVAFHGGGQ (255 aa). Residues C38, C41, C56, and C59 each coordinate Zn(2+). Residues 38 to 59 form a C4-type zinc finger; it reads CPACKHMIYKKDLGLAKICPTC.

It belongs to the AccD/PCCB family. As to quaternary structure, acetyl-CoA carboxylase is a heterohexamer composed of biotin carboxyl carrier protein (AccB), biotin carboxylase (AccC) and two subunits each of ACCase subunit alpha (AccA) and ACCase subunit beta (AccD). Zn(2+) is required as a cofactor.

Its subcellular location is the cytoplasm. The enzyme catalyses N(6)-carboxybiotinyl-L-lysyl-[protein] + acetyl-CoA = N(6)-biotinyl-L-lysyl-[protein] + malonyl-CoA. The protein operates within lipid metabolism; malonyl-CoA biosynthesis; malonyl-CoA from acetyl-CoA: step 1/1. Functionally, component of the acetyl coenzyme A carboxylase (ACC) complex. Biotin carboxylase (BC) catalyzes the carboxylation of biotin on its carrier protein (BCCP) and then the CO(2) group is transferred by the transcarboxylase to acetyl-CoA to form malonyl-CoA. The chain is Acetyl-coenzyme A carboxylase carboxyl transferase subunit beta from Streptococcus pyogenes serotype M1.